Here is a 242-residue protein sequence, read N- to C-terminus: UPF0309 protein BMEA_B0892 (242 aa).

Positions 30 to 214 constitute an SIS domain; sequence AADLIAAAAR…ARLVGEGDAP (185 aa).

The protein belongs to the UPF0309 family.

The polypeptide is UPF0309 protein BMEA_B0892 (Brucella melitensis biotype 2 (strain ATCC 23457)).